The following is a 199-amino-acid chain: DnaJ homolog subfamily C member 5B (199 aa).

2 positions are modified to phosphoserine: Ser14 and Ser16. The region spanning 19 to 84 (ALYEILGLHK…SKRNIYDKYG (66 aa)) is the J domain.

In terms of assembly, interacts with the chaperone complex consisting of HSC70 and SGTA. In terms of processing, palmitoylated.

Its subcellular location is the membrane. This is DnaJ homolog subfamily C member 5B (DNAJC5B) from Bos taurus (Bovine).